A 621-amino-acid polypeptide reads, in one-letter code: Phosphoenolpyruvate carboxykinase [GTP] (621 aa).

Substrate is bound by residues R82 and 220-222 (YGG). Residues K229 and H249 each contribute to the Mn(2+) site. S271 serves as a coordination point for substrate. GTP is bound at residue 272–277 (QCGKTN). Residue C273 is part of the active site. D296 provides a ligand contact to Mn(2+). Residue 386–388 (NSR) participates in substrate binding. GTP is bound by residues R388, R419, and 514–517 (FGEN).

Belongs to the phosphoenolpyruvate carboxykinase [GTP] family. As to quaternary structure, monomer. The cofactor is Mn(2+).

Its subcellular location is the cytoplasm. The catalysed reaction is oxaloacetate + GTP = phosphoenolpyruvate + GDP + CO2. It participates in carbohydrate biosynthesis; gluconeogenesis. Functionally, catalyzes the conversion of oxaloacetate (OAA) to phosphoenolpyruvate (PEP), the rate-limiting step in the metabolic pathway that produces glucose from lactate and other precursors derived from the citric acid cycle. The polypeptide is Phosphoenolpyruvate carboxykinase [GTP] (Corynebacterium kroppenstedtii (strain DSM 44385 / JCM 11950 / CIP 105744 / CCUG 35717)).